A 404-amino-acid polypeptide reads, in one-letter code: Zinc metalloprotease Rip1 (404 aa).

A helical transmembrane segment spans residues 1–21; sequence MMFVTGIVLFALAILISVALH. Histidine 21 contacts Zn(2+). Glutamate 22 is an active-site residue. Histidine 25 is a Zn(2+) binding site. A helical membrane pass occupies residues 104-124; that stretch reads PGMNLAICLVLIYAIALVWGL. One can recognise a PDZ domain in the interval 121–203; the sequence is VWGLPNLHPP…SVPIVVERDG (83 aa). Aspartate 202 contributes to the Zn(2+) binding site. Helical transmembrane passes span 313 to 333 and 373 to 393; these read LWVA…TINL and LLPA…LTVT.

The protein belongs to the peptidase M50B family. Requires Zn(2+) as cofactor.

It localises to the cell membrane. Its function is as follows. A probable intramembrane site-2 protease (S2P) that cleaves type-2 transmembrane proteins within their membrane-spanning domains. Cleaves PbpB (PBP3, FtsI); cleavage is inhibited by Wag31-PbpB interaction. Probably also cleaves anti-sigma factors RskA, RslA and RsmA. Functionally, regulated intramembrane proteolysis (RIP) occurs when an extracytoplasmic signal (possibly oxidative stress) triggers a concerted proteolytic cascade to transmit information and elicit cellular responses. The membrane-spanning regulatory substrate protein (includes anti-sigma factors RskA, RslA, RsmA, and PbpB in M.tuberculosis) is first cut extracytoplasmically (site-1 protease, S1P), then within the membrane itself (site-2 protease, S2P, this entry), while cytoplasmic proteases finish degrading the regulatory protein, liberating the effector protein (ECF sigma factors SigK, SigL and SigM). The protein is Zinc metalloprotease Rip1 (rip1) of Mycobacterium bovis (strain BCG / Pasteur 1173P2).